We begin with the raw amino-acid sequence, 261 residues long: MSGKTYRATGINLRRMPLGESDLLMTILTRENGLVRAVARGARKANARIGGRTEQFVVNDLQLYRGRSLDQLTQAESLRTFPGLLQDLGRLTAAQYLAEGVLQEATEGQAQEDLYDLLLVHLERLAATPSHQIAARLVHGVYQLLAVGGVAPEVHFCTVSHRPISAESAGFSVEGGGLVALECLSHERVGFRLDIEQVAALQLLADADLTPASLDWNYLWIGLERLLRRHIEFHFDRPLRAATLLEICFEPLAVPAAASPQ.

The protein belongs to the RecO family.

Involved in DNA repair and RecF pathway recombination. The sequence is that of DNA repair protein RecO from Gloeobacter violaceus (strain ATCC 29082 / PCC 7421).